The primary structure comprises 111 residues: Secreted RxLR effector protein 159 (111 aa).

Positions Met-1 to Ala-21 are cleaved as a signal peptide. The short motif at Arg-50–Arg-71 is the RxLR-dEER element. Residue Asn-81 is glycosylated (N-linked (GlcNAc...) asparagine).

It belongs to the RxLR effector family.

Its subcellular location is the secreted. It localises to the host nucleus. The protein resides in the host cytoplasm. Secreted effector that completely suppresses the host cell death induced by cell death-inducing proteins. The protein is Secreted RxLR effector protein 159 of Plasmopara viticola (Downy mildew of grapevine).